The primary structure comprises 448 residues: Methylenetetrahydrofolate--tRNA-(uracil-5-)-methyltransferase TrmFO (448 aa).

FAD is bound at residue 13–18 (GAGLAG).

Belongs to the MnmG family. TrmFO subfamily. The cofactor is FAD.

The protein resides in the cytoplasm. The catalysed reaction is uridine(54) in tRNA + (6R)-5,10-methylene-5,6,7,8-tetrahydrofolate + NADH + H(+) = 5-methyluridine(54) in tRNA + (6S)-5,6,7,8-tetrahydrofolate + NAD(+). The enzyme catalyses uridine(54) in tRNA + (6R)-5,10-methylene-5,6,7,8-tetrahydrofolate + NADPH + H(+) = 5-methyluridine(54) in tRNA + (6S)-5,6,7,8-tetrahydrofolate + NADP(+). Its function is as follows. Catalyzes the folate-dependent formation of 5-methyl-uridine at position 54 (M-5-U54) in all tRNAs. The sequence is that of Methylenetetrahydrofolate--tRNA-(uracil-5-)-methyltransferase TrmFO from Streptococcus pyogenes serotype M4 (strain MGAS10750).